The sequence spans 176 residues: Shikimate kinase (176 aa).

12 to 17 (GSGKST) lines the ATP pocket. Position 16 (S16) interacts with Mg(2+). Substrate-binding residues include D34, R58, and G80. Residue R117 coordinates ATP. Residue R136 coordinates substrate. R153 contributes to the ATP binding site.

It belongs to the shikimate kinase family. As to quaternary structure, monomer. Mg(2+) serves as cofactor.

It localises to the cytoplasm. It catalyses the reaction shikimate + ATP = 3-phosphoshikimate + ADP + H(+). It functions in the pathway metabolic intermediate biosynthesis; chorismate biosynthesis; chorismate from D-erythrose 4-phosphate and phosphoenolpyruvate: step 5/7. Functionally, catalyzes the specific phosphorylation of the 3-hydroxyl group of shikimic acid using ATP as a cosubstrate. The protein is Shikimate kinase of Mycobacterium avium (strain 104).